Consider the following 317-residue polypeptide: uncharacterized protein (317 aa).

The HTH lysR-type domain maps to 1 to 60; the sequence is MKHELSSMKAFVILAESSSFNNAAKLLNITQPALTRRIKKMEEDLHVQLFERTTRKVTLT. Positions 20–40 form a DNA-binding region, H-T-H motif; sequence FNNAAKLLNITQPALTRRIKK.

This sequence belongs to the LysR transcriptional regulatory family.

This is an uncharacterized protein from Escherichia coli (strain K12).